Reading from the N-terminus, the 310-residue chain is Olfactory receptor 5AR1 (310 aa).

Residues 1–28 (MDKENSSMVTEFIFMGITQDPQMEIIFF) are Extracellular-facing. Asn5 is a glycosylation site (N-linked (GlcNAc...) asparagine). The chain crosses the membrane as a helical span at residues 29 to 49 (VVFLIVYLVNVVGNIGMIILI). At 50–58 (TTDTQLHTP) the chain is on the cytoplasmic side. A helical membrane pass occupies residues 59–79 (MYFFLCNLSFVDLGYSSAIAP). Residues 80–100 (RMLADFLTNHKVISFSSCATQ) lie on the Extracellular side of the membrane. A disulfide bridge connects residues Cys97 and Cys189. The helical transmembrane segment at 101–120 (FAFFVGFVDAECYVLAAMAY) threads the bilayer. The Cytoplasmic portion of the chain corresponds to 121-139 (GRFVAICRPLHYSTFMSKQ). The chain crosses the membrane as a helical span at residues 140–160 (VCLALMLGSYLAGLVSLVAHT). At 161–205 (TLTFSLSYCGSNIINHFFCEIPPLLALSCSDTYISEILLFSLCGF) the chain is on the extracellular side. Residues 206-226 (IEFSTILIIFISYTFILVAII) traverse the membrane as a helical segment. Residues 227–239 (RMRSAEGRLKAFS) are Cytoplasmic-facing. The helical transmembrane segment at 240 to 260 (TCGSHLTGITLFYGTVMFMYL) threads the bilayer. At 261-271 (RPTSSYSLDQD) the chain is on the extracellular side. A helical transmembrane segment spans residues 272–292 (KWASVFYTVIIPMLNPLIYSL). Residues 293–310 (RNKDVKAAFKKLIGKKSQ) are Cytoplasmic-facing.

It belongs to the G-protein coupled receptor 1 family.

It localises to the cell membrane. Its function is as follows. Odorant receptor. The sequence is that of Olfactory receptor 5AR1 from Homo sapiens (Human).